The following is a 333-amino-acid chain: uncharacterized protein (333 aa).

This is an uncharacterized protein from Caenorhabditis elegans.